Consider the following 424-residue polypeptide: Histidine--tRNA ligase (424 aa).

The protein belongs to the class-II aminoacyl-tRNA synthetase family. As to quaternary structure, homodimer.

The protein localises to the cytoplasm. It catalyses the reaction tRNA(His) + L-histidine + ATP = L-histidyl-tRNA(His) + AMP + diphosphate + H(+). In Shewanella halifaxensis (strain HAW-EB4), this protein is Histidine--tRNA ligase.